The primary structure comprises 412 residues: Tryptophan synthase beta chain (412 aa).

K92 bears the N6-(pyridoxal phosphate)lysine mark.

Belongs to the TrpB family. Tetramer of two alpha and two beta chains. Requires pyridoxal 5'-phosphate as cofactor.

The enzyme catalyses (1S,2R)-1-C-(indol-3-yl)glycerol 3-phosphate + L-serine = D-glyceraldehyde 3-phosphate + L-tryptophan + H2O. It functions in the pathway amino-acid biosynthesis; L-tryptophan biosynthesis; L-tryptophan from chorismate: step 5/5. Its function is as follows. The beta subunit is responsible for the synthesis of L-tryptophan from indole and L-serine. The sequence is that of Tryptophan synthase beta chain from Methylibium petroleiphilum (strain ATCC BAA-1232 / LMG 22953 / PM1).